The following is a 37-amino-acid chain: Cytochrome b6-f complex subunit 5 (37 aa).

A helical membrane pass occupies residues 5-25; the sequence is LLSGIVLGLIPITLAGLFVTA.

This sequence belongs to the PetG family. As to quaternary structure, the 4 large subunits of the cytochrome b6-f complex are cytochrome b6, subunit IV (17 kDa polypeptide, PetD), cytochrome f and the Rieske protein, while the 4 small subunits are PetG, PetL, PetM and PetN. The complex functions as a dimer.

Its subcellular location is the plastid. It localises to the chloroplast thylakoid membrane. In terms of biological role, component of the cytochrome b6-f complex, which mediates electron transfer between photosystem II (PSII) and photosystem I (PSI), cyclic electron flow around PSI, and state transitions. PetG is required for either the stability or assembly of the cytochrome b6-f complex. In Cryptomeria japonica (Japanese cedar), this protein is Cytochrome b6-f complex subunit 5.